The chain runs to 169 residues: MSSSHKSWNSIYEFTVKDINGVDVSLEKYRGHVCLIVNVACKUGATDKNYRQLQEMHTRLVGKGLRILAFPCNQFGGQEPWAEAEIKKFVTEKYGVQFDMFSKIKVNGSDADDLYKFLKSRQHGTLTNNIKWNFSKFLVDRQGQPVKRYSPTTAPYDIEGDIMELLEKK.

Selenocysteine 43 is a catalytic residue. A non-standard amino acid (selenocysteine) is located at residue selenocysteine 43.

It belongs to the glutathione peroxidase family.

The enzyme catalyses 2 glutathione + H2O2 = glutathione disulfide + 2 H2O. In Schistosoma mansoni (Blood fluke), this protein is Glutathione peroxidase (GPX1).